The chain runs to 271 residues: Aquaporin-1 (271 aa).

Residues 1–11 lie on the Cytoplasmic side of the membrane; sequence MASEFKKKLFW. The helical transmembrane segment at 12 to 29 threads the bilayer; the sequence is RAVVAEFLAMILFVFISI. Topologically, residues 30–48 are extracellular; the sequence is GSALGFNYPVRNNQTAGAA. The N-linked (GlcNAc...) asparagine glycan is linked to Asn-42. The helical transmembrane segment at 49–67 threads the bilayer; the sequence is QDNVKVSLAFGLSIATLAQ. The Cytoplasmic portion of the chain corresponds to 68–70; that stretch reads SVG. Residues 71–84 lie within the membrane without spanning it; it reads HISGAHLNPAVTLG. An NPA 1 motif is present at residues 78 to 80; that stretch reads NPA. Residues 85-92 lie on the Cytoplasmic side of the membrane; that stretch reads LLLSCQIS. A helical transmembrane segment spans residues 93–111; that stretch reads ILRAVMYIIAQCVGAIVAT. The Extracellular segment spans residues 112-135; that stretch reads AILSGITSSLPDNSLGRNELAPGV. The helical transmembrane segment at 136–155 threads the bilayer; that stretch reads NSGQGLGIEIIGTLQLVLCV. Residues 156–165 lie on the Cytoplasmic side of the membrane; it reads LATTDRRRRD. Residues 166-183 traverse the membrane as a helical segment; the sequence is LGGSGPLAIGLSVALGHL. At 184-188 the chain is on the extracellular side; that stretch reads LAIDY. An intramembrane segment occupies 189–201; sequence TGCGINPARSFGS. Residues 194-196 carry the NPA 2 motif; the sequence is NPA. Residues 202–208 lie on the Extracellular side of the membrane; it reads SVITHNF. Residues 209–226 traverse the membrane as a helical segment; sequence KDHWIFWVGPFIGGALAV. Over 227-271 the chain is Cytoplasmic; it reads LIYDFILAPRSSDLTDRVKVWTSGQVEEYELDGDDINSRVEMKPK. At Ser-249 the chain carries Phosphoserine. Phosphotyrosine is present on Tyr-255. A Phosphoserine modification is found at Ser-264.

It belongs to the MIP/aquaporin (TC 1.A.8) family. As to quaternary structure, homotetramer; each monomer provides an independent water pore. Component of the ankyrin-1 complex in the erythrocyte, composed of ANK1, RHCE, RHAG, SLC4A1, EPB42, GYPA, GYPB and AQP1. Interacts with EPHB2; involved in endolymph production in the inner ear. Identified in a complex with STOM. Interacts (via the N-terminal) with ANK1 (via ANK 1-5 repeats). Interacts (via the C-terminal) with EPB42.

The protein localises to the cell membrane. It carries out the reaction H2O(in) = H2O(out). The enzyme catalyses nitric oxide(out) = nitric oxide(in). The catalysed reaction is CO2(out) = CO2(in). It catalyses the reaction glycerol(in) = glycerol(out). It carries out the reaction H2O2(out) = H2O2(in). The enzyme catalyses K(+)(in) = K(+)(out). The catalysed reaction is Na(+)(in) = Na(+)(out). In terms of biological role, forms a water channel that facilitates the transport of water across cell membranes, playing a crucial role in water homeostasis in various tissues. Could also be permeable to small solutes including hydrogen peroxide, glycerol and gases such as amonnia (NH3), nitric oxide (NO) and carbon dioxide (CO2). Recruited to the ankyrin-1 complex, a multiprotein complex of the erythrocyte membrane, it could be part of a CO2 metabolon, linking facilitated diffusion of CO2 across the membrane, anion exchange of Cl(-)/HCO3(-) and interconversion of dissolved CO2 and carbonic acid in the cytosol. In vitro, it shows non-selective gated cation channel activity and may be permeable to cations like K(+) and Na(+) in vivo. The sequence is that of Aquaporin-1 from Canis lupus familiaris (Dog).